Consider the following 268-residue polypeptide: Energy-coupling factor transporter transmembrane protein EcfT (268 aa).

The next 5 membrane-spanning stretches (helical) occupy residues 29–49 (VFIFLVFMFMTRDPLLLTVAV), 75–95 (IIIVLTFVLHLFMTGGGEVIV), 107–127 (LIEGFMLAMKLAMIITIASLL), 152–172 (LPTHELALMMSIALRFIPTLI), and 242–262 (WGLKDSVVLAVFLLFAAAVMA).

This sequence belongs to the energy-coupling factor EcfT family. As to quaternary structure, forms a stable energy-coupling factor (ECF) transporter complex composed of 2 membrane-embedded substrate-binding proteins (S component), 2 ATP-binding proteins (A component) and 2 transmembrane proteins (T component). May be able to interact with more than 1 S component at a time.

It is found in the cell membrane. Functionally, transmembrane (T) component of an energy-coupling factor (ECF) ABC-transporter complex. Unlike classic ABC transporters this ECF transporter provides the energy necessary to transport a number of different substrates. The sequence is that of Energy-coupling factor transporter transmembrane protein EcfT from Bacillus selenitireducens (strain ATCC 700615 / DSM 15326 / MLS10).